We begin with the raw amino-acid sequence, 150 residues long: MIRILGEGKGSKLLENLKEKLEEIVKKEIGDVHVNVILVSEDEIKELNQQFRGQDRPTDVLTFPLMEEDVYGEIYVCPLIVEENAREFNNTFEKELLEVVIHGILHLAGYDHEFEDKNSKEMFEKQKKYVEEVWGEWRSNPSEDSDPGKR.

3 residues coordinate Zn(2+): histidine 102, histidine 106, and histidine 112.

Belongs to the endoribonuclease YbeY family. The cofactor is Zn(2+).

Its subcellular location is the cytoplasm. Single strand-specific metallo-endoribonuclease involved in late-stage 70S ribosome quality control and in maturation of the 3' terminus of the 16S rRNA. This chain is Endoribonuclease YbeY, found in Thermotoga maritima (strain ATCC 43589 / DSM 3109 / JCM 10099 / NBRC 100826 / MSB8).